The following is a 97-amino-acid chain: DNA-directed RNA polymerase subunit omega (97 aa).

Residues methionine 1–leucine 16 show a composition bias toward polar residues. The disordered stretch occupies residues methionine 1–glycine 21.

The protein belongs to the RNA polymerase subunit omega family. As to quaternary structure, the RNAP catalytic core consists of 2 alpha, 1 beta, 1 beta' and 1 omega subunit. When a sigma factor is associated with the core the holoenzyme is formed, which can initiate transcription.

It catalyses the reaction RNA(n) + a ribonucleoside 5'-triphosphate = RNA(n+1) + diphosphate. Functionally, promotes RNA polymerase assembly. Latches the N- and C-terminal regions of the beta' subunit thereby facilitating its interaction with the beta and alpha subunits. This chain is DNA-directed RNA polymerase subunit omega, found in Saccharopolyspora erythraea (strain ATCC 11635 / DSM 40517 / JCM 4748 / NBRC 13426 / NCIMB 8594 / NRRL 2338).